We begin with the raw amino-acid sequence, 364 residues long: DNA replication and repair protein RecF (364 aa).

ATP is bound at residue 30–37 (GENGSGKT).

The protein belongs to the RecF family.

It localises to the cytoplasm. Its function is as follows. The RecF protein is involved in DNA metabolism; it is required for DNA replication and normal SOS inducibility. RecF binds preferentially to single-stranded, linear DNA. It also seems to bind ATP. In Xylella fastidiosa (strain M23), this protein is DNA replication and repair protein RecF.